The following is a 507-amino-acid chain: ATP synthase subunit alpha (507 aa).

ATP is bound at residue 170 to 177 (GDRQTGKT).

The protein belongs to the ATPase alpha/beta chains family. In terms of assembly, F-type ATPases have 2 components, CF(1) - the catalytic core - and CF(0) - the membrane proton channel. CF(1) has five subunits: alpha(3), beta(3), gamma(1), delta(1), epsilon(1). CF(0) has three main subunits: a(1), b(2) and c(9-12). The alpha and beta chains form an alternating ring which encloses part of the gamma chain. CF(1) is attached to CF(0) by a central stalk formed by the gamma and epsilon chains, while a peripheral stalk is formed by the delta and b chains.

Its subcellular location is the cell inner membrane. It catalyses the reaction ATP + H2O + 4 H(+)(in) = ADP + phosphate + 5 H(+)(out). Produces ATP from ADP in the presence of a proton gradient across the membrane. The alpha chain is a regulatory subunit. This chain is ATP synthase subunit alpha, found in Fervidobacterium nodosum (strain ATCC 35602 / DSM 5306 / Rt17-B1).